Here is a 566-residue protein sequence, read N- to C-terminus: NAD-dependent malic enzyme (566 aa).

The active-site Proton donor is Y105. R158 is a binding site for NAD(+). K176 functions as the Proton acceptor in the catalytic mechanism. 3 residues coordinate a divalent metal cation: E247, D248, and D271. D271 and N419 together coordinate NAD(+).

This sequence belongs to the malic enzymes family. In terms of assembly, homotetramer. The cofactor is Mg(2+). Requires Mn(2+) as cofactor.

It catalyses the reaction (S)-malate + NAD(+) = pyruvate + CO2 + NADH. The enzyme catalyses oxaloacetate + H(+) = pyruvate + CO2. The polypeptide is NAD-dependent malic enzyme (Acinetobacter baylyi (strain ATCC 33305 / BD413 / ADP1)).